We begin with the raw amino-acid sequence, 183 residues long: Peptide deformylase (183 aa).

Fe cation-binding residues include cysteine 110 and histidine 153. Glutamate 154 is an active-site residue. Residue histidine 157 coordinates Fe cation.

Belongs to the polypeptide deformylase family. The cofactor is Fe(2+).

The catalysed reaction is N-terminal N-formyl-L-methionyl-[peptide] + H2O = N-terminal L-methionyl-[peptide] + formate. Its function is as follows. Removes the formyl group from the N-terminal Met of newly synthesized proteins. Requires at least a dipeptide for an efficient rate of reaction. N-terminal L-methionine is a prerequisite for activity but the enzyme has broad specificity at other positions. This chain is Peptide deformylase, found in Shouchella clausii (strain KSM-K16) (Alkalihalobacillus clausii).